The following is a 94-amino-acid chain: Small ribosomal subunit protein uS19 (94 aa).

The interval 73 to 94 (EFAPTRTYRGHGKDAERTTRRR) is disordered. A compositionally biased stretch (basic and acidic residues) spans 83–94 (HGKDAERTTRRR).

It belongs to the universal ribosomal protein uS19 family.

In terms of biological role, protein S19 forms a complex with S13 that binds strongly to the 16S ribosomal RNA. This chain is Small ribosomal subunit protein uS19, found in Thermomicrobium roseum (strain ATCC 27502 / DSM 5159 / P-2).